The following is a 416-amino-acid chain: Cysteate synthase (416 aa).

At Lys104 the chain carries N6-(pyridoxal phosphate)lysine. A pyridoxal 5'-phosphate-binding site is contributed by Asn130.

The protein belongs to the threonine synthase family. Cysteate synthase subfamily. As to quaternary structure, homotrimer. Pyridoxal 5'-phosphate is required as a cofactor.

The catalysed reaction is O-phospho-L-serine + sulfite + H(+) = L-cysteate + phosphate. Its pathway is cofactor biosynthesis; coenzyme M biosynthesis. Specifically catalyzes the beta-elimination of phosphate from L-phosphoserine and the beta-addition of sulfite to the dehydroalanine intermediate to produce L-cysteate. The protein is Cysteate synthase of Methanosarcina mazei (strain ATCC BAA-159 / DSM 3647 / Goe1 / Go1 / JCM 11833 / OCM 88) (Methanosarcina frisia).